We begin with the raw amino-acid sequence, 450 residues long: Gluconate permease (450 aa).

12 helical membrane-spanning segments follow: residues 6-26, 30-50, 60-80, 116-136, 142-162, 183-203, 233-253, 269-289, 312-332, 338-358, 366-386, and 430-450; these read HDAYLLLDALVTIIGLIVLIT, VHPFIALIIAAGFLGLTSGMP, DGFGGVLGFVGVILALGTMLG, VGIPLFFEIGFILLIPLVFIV, VSLIKIGIPLLAGLSAVHGLV, ILYGLIVALPTAAIAGPLFGA, FGVTLATVLLPVFLMLLKTFA, MIGHPISALLLALLVALYTFG, AIVMIIGAGGGFKQMLVASGV, HLAVNAQISPILLAWLVAAVI, TVATITGAGIVVPVIDLIPGV, and AMETILSVVGLVFILLLSLVL.

The protein belongs to the GntP permease family.

It localises to the cell inner membrane. Its pathway is carbohydrate acid metabolism; D-gluconate degradation. The polypeptide is Gluconate permease (gnuT) (Pseudomonas aeruginosa (strain ATCC 15692 / DSM 22644 / CIP 104116 / JCM 14847 / LMG 12228 / 1C / PRS 101 / PAO1)).